A 553-amino-acid polypeptide reads, in one-letter code: Putative transport protein YidE (553 aa).

A run of 5 helical transmembrane segments spans residues 4–24 (IALT…IGNV), 28–48 (GIGL…HFVS), 65–85 (FGLI…FFAS), 95–115 (LFAV…HKLF), and 158–178 (MSYA…MWML). RCK C-terminal domains are found at residues 191–276 (QQHE…VIGQ) and 279–361 (DTSL…VLGN). A run of 6 helical transmembrane segments spans residues 371–391 (MLPV…PVFV), 393–413 (GFPA…ALIL), 439–459 (IVLF…NTLV), 464–484 (LSWI…VGIL), 493–513 (YLTM…LAFA), and 533–553 (LVMF…WSIG).

Belongs to the AAE transporter (TC 2.A.81) family. YidE subfamily.

The protein localises to the cell membrane. The chain is Putative transport protein YidE from Shigella boydii serotype 4 (strain Sb227).